Consider the following 420-residue polypeptide: MSFETISVIGLGYIGLPTAAAFASRKKKVIGVDVNAHAVETINRGAIHIVEPDLDKVVKIAVEGGYLQAVTKPQAADAFLIAVPTPFKGDHEPDMIFVESAAKSIAPVLKKGDLVILESTSPVGATEQMAQWLAEARPDLSFPQQAGEAADINIAYCPERVLPGQVMVELIQNDRVIGGMTPKCSARASALYKIFLEGECVVTNSRTAEMCKLTENSFRDVNIAFANELSLICDEQGINVWELIRLANRHPRVNILQPGPGVGGHCIAVDPWFIVSQNPQLARLIHTARLVNDGKPLWVVDRVKAAVADCLAASDKRASEVKIACFGLAFKPDIDDLRESPAVGVARLIAEWHVGETLVVEPNVEQLPKSLMGLVTLKDTATALQQADVLVMLVDHKQFKAIKPEDIKQQWIVDTKGVWR.

The NAD(+) site is built by Tyr-13, Ile-14, Asp-33, Thr-85, and Thr-126. UDP-N-acetyl-alpha-D-mannosaminouronate contacts are provided by Arg-160, Val-161, Lys-212, Asn-216, Arg-219, His-250, Arg-252, and Gly-263. Residue Lys-212 is the Proton donor/acceptor of the active site. Cys-266 (nucleophile) is an active-site residue. The UDP-N-acetyl-alpha-D-mannosaminouronate site is built by Phe-330 and Lys-331. Position 338 (Arg-338) interacts with NAD(+). A UDP-N-acetyl-alpha-D-mannosaminouronate-binding site is contributed by Lys-416.

Belongs to the UDP-glucose/GDP-mannose dehydrogenase family. WecC subfamily. In terms of assembly, homodimer.

The enzyme catalyses UDP-N-acetyl-alpha-D-mannosamine + 2 NAD(+) + H2O = UDP-N-acetyl-alpha-D-mannosaminouronate + 2 NADH + 3 H(+). It participates in bacterial outer membrane biogenesis; enterobacterial common antigen biosynthesis. Its function is as follows. Catalyzes the four-electron oxidation of UDP-N-acetyl-D-mannosamine (UDP-ManNAc), reducing NAD(+) and releasing UDP-N-acetylmannosaminuronic acid (UDP-ManNAcA). This chain is UDP-N-acetyl-D-mannosamine dehydrogenase, found in Yersinia pestis.